Reading from the N-terminus, the 98-residue chain is Trp operon repressor homolog (98 aa).

A DNA-binding region spans residues 59 to 82; that stretch reads QRQVSQMLGVGVATITRGSNELKA.

This sequence belongs to the TrpR family. Homodimer.

It is found in the cytoplasm. Functionally, this protein is an aporepressor. When complexed with L-tryptophan it binds the operator region of the trp operon and prevents the initiation of transcription. The protein is Trp operon repressor homolog of Vibrio atlanticus (strain LGP32) (Vibrio splendidus (strain Mel32)).